An 863-amino-acid polypeptide reads, in one-letter code: Alanine--tRNA ligase (863 aa).

Positions 552, 556, 654, and 658 each coordinate Zn(2+).

Belongs to the class-II aminoacyl-tRNA synthetase family. Zn(2+) serves as cofactor.

The protein localises to the cytoplasm. It carries out the reaction tRNA(Ala) + L-alanine + ATP = L-alanyl-tRNA(Ala) + AMP + diphosphate. In terms of biological role, catalyzes the attachment of alanine to tRNA(Ala) in a two-step reaction: alanine is first activated by ATP to form Ala-AMP and then transferred to the acceptor end of tRNA(Ala). Also edits incorrectly charged Ser-tRNA(Ala) and Gly-tRNA(Ala) via its editing domain. In Nitrosomonas eutropha (strain DSM 101675 / C91 / Nm57), this protein is Alanine--tRNA ligase.